Here is a 139-residue protein sequence, read N- to C-terminus: Arsenate reductase (139 aa).

Residues Cys10, Cys82, and Cys89 each act as nucleophile in the active site. 2 disulfide bridges follow: Cys10–Cys82 and Cys82–Cys89.

It belongs to the low molecular weight phosphotyrosine protein phosphatase family. Thioredoxin-coupled ArsC subfamily. Monomer.

The protein localises to the cytoplasm. The catalysed reaction is arsenate + [thioredoxin]-dithiol + H(+) = arsenite + [thioredoxin]-disulfide + H2O. Activity is potassium and sulfate-independent. Functionally, catalyzes the reduction of arsenate [As(V)] to arsenite [As(III)]. In vitro, can dephosphorylate para-nitrophenyl phosphate (pNPP). This is Arsenate reductase from Bacillus subtilis (strain 168).